The sequence spans 577 residues: METEFGLTEYASEHTITPVPCLLKEMYSDFIVQEILADHTVLAIPSPDVVLESTGSKKEDIEIEECVAKPDCISEETLAALNDRFSTKGDPVLVKVDDLSKEDRKSIHHFIRERYAGVLITETKEDGILVSHGHTKSSRKRKLWDEKVPKECHFTICKENKETSFACQLIAKFLNVGPNNIRTHGIKDKRAVTSQRVSVTKVHERTILDLNSKLRGIRVFGCEYKDDPVQMGAHWGNRFSIVLRSLPDDSEQLLHQRLETFQNTGFINYFGTQRFGSRSSTTAEIGLAIVKRDWEKAVKMIMTNAMPDHLGYGSVGYAAKCFSQTGDARKAFSKLKGAQAFATVEGNILKCLSKGGTWQNCITEAIPIQSRSLYVHAYQSLIWNKVASRRVKEYGTRVHESDVGANGFSLGEHATHYDIHIPLPGENLPFEGSYGAKWISELLEEDGLTQSSFTALKDRFSLGESSRCLFVEAKELKWKFIRYGNARDLLQDGLQTRAIPEAEQKGPLLALQIQFSLISGSYATVALREVTGSDMGKKAMRDASFKTRGDDEKTEENVLEEKGSDDANELNLVSEDQ.

Catalysis depends on Asp-188, which acts as the Nucleophile. The TRUD domain occupies 265–472; sequence GFINYFGTQR…GESSRCLFVE (208 aa). A compositionally biased stretch (basic and acidic residues) spans 538–565; sequence KAMRDASFKTRGDDEKTEENVLEEKGSD. The interval 538–577 is disordered; it reads KAMRDASFKTRGDDEKTEENVLEEKGSDDANELNLVSEDQ.

Belongs to the pseudouridine synthase TruD family.

The catalysed reaction is a uridine in tRNA = a pseudouridine in tRNA. The chain is Putative pseudouridine synthase B0024.11 from Caenorhabditis elegans.